A 177-amino-acid chain; its full sequence is Large ribosomal subunit protein uL10 (177 aa).

The protein belongs to the universal ribosomal protein uL10 family. Part of the ribosomal stalk of the 50S ribosomal subunit. The N-terminus interacts with L11 and the large rRNA to form the base of the stalk. The C-terminus forms an elongated spine to which L12 dimers bind in a sequential fashion forming a multimeric L10(L12)X complex.

Functionally, forms part of the ribosomal stalk, playing a central role in the interaction of the ribosome with GTP-bound translation factors. This Caldanaerobacter subterraneus subsp. tengcongensis (strain DSM 15242 / JCM 11007 / NBRC 100824 / MB4) (Thermoanaerobacter tengcongensis) protein is Large ribosomal subunit protein uL10.